The chain runs to 420 residues: Phosphoribosylamine--glycine ligase (420 aa).

Positions 108–314 constitute an ATP-grasp domain; it reads KQFMEKYAIP…FAALIAALLN (207 aa). Position 134–195 (134–195) interacts with ATP; that stretch reads LDERGVPIVI…EDFLAGEEFS (62 aa). Mg(2+) is bound by residues E284 and N286.

The protein belongs to the GARS family. It depends on Mg(2+) as a cofactor. The cofactor is Mn(2+).

It catalyses the reaction 5-phospho-beta-D-ribosylamine + glycine + ATP = N(1)-(5-phospho-beta-D-ribosyl)glycinamide + ADP + phosphate + H(+). Its pathway is purine metabolism; IMP biosynthesis via de novo pathway; N(1)-(5-phospho-D-ribosyl)glycinamide from 5-phospho-alpha-D-ribose 1-diphosphate: step 2/2. This is Phosphoribosylamine--glycine ligase from Listeria innocua serovar 6a (strain ATCC BAA-680 / CLIP 11262).